The sequence spans 255 residues: Large ribosomal subunit protein uL6m (255 aa).

The interval 39–61 (AARRNFSATTTRPSKLGRTPLSI) is disordered.

Belongs to the universal ribosomal protein uL6 family. As to quaternary structure, component of the mitochondrial large ribosomal subunit (mt-LSU). Mature N.crassa 74S mitochondrial ribosomes consist of a small (37S) and a large (54S) subunit. The 37S small subunit contains a 16S ribosomal RNA (16S mt-rRNA) and 32 different proteins. The 54S large subunit contains a 23S rRNA (23S mt-rRNA) and 42 different proteins.

The protein resides in the mitochondrion. Functionally, component of the mitochondrial ribosome (mitoribosome), a dedicated translation machinery responsible for the synthesis of mitochondrial genome-encoded proteins, including at least some of the essential transmembrane subunits of the mitochondrial respiratory chain. The mitoribosomes are attached to the mitochondrial inner membrane and translation products are cotranslationally integrated into the membrane. In Neurospora crassa (strain ATCC 24698 / 74-OR23-1A / CBS 708.71 / DSM 1257 / FGSC 987), this protein is Large ribosomal subunit protein uL6m (mrpl6).